Here is a 268-residue protein sequence, read N- to C-terminus: MERYESLFAQLKERKEGAFVPFVTLGDPGIEQSLKIIDTLIEAGADTLELGIPFSDPLADGPTIQNATLRAFAAGVTPAQCFEMLALIRQKHPTIPIGLLMYANLVFNKGIDEFYAQCEKVGVDSVLVADVPVEESAPFRQAALRHNVAPIFICPPNADDDLLRQIASYGRGYTYLLSRAGVTGAENRAALPLNHLVAKLKEYNAAPPLQGFGISAPDQVKAAIDAGAAGAISGSAIVKIIEQHINEPKKMLAALKAFVQPMKAATRS.

Active-site proton acceptor residues include Glu-49 and Asp-60.

It belongs to the TrpA family. In terms of assembly, tetramer of two alpha and two beta chains.

It catalyses the reaction (1S,2R)-1-C-(indol-3-yl)glycerol 3-phosphate + L-serine = D-glyceraldehyde 3-phosphate + L-tryptophan + H2O. The protein operates within amino-acid biosynthesis; L-tryptophan biosynthesis; L-tryptophan from chorismate: step 5/5. In terms of biological role, the alpha subunit is responsible for the aldol cleavage of indoleglycerol phosphate to indole and glyceraldehyde 3-phosphate. In Escherichia coli O157:H7, this protein is Tryptophan synthase alpha chain.